The chain runs to 833 residues: Leucine--tRNA ligase (833 aa).

The 'HIGH' region motif lies at 41–52; that stretch reads PYPSGAGLHVGH. The 'KMSKS' region signature appears at 610 to 614; it reads KMSKS. An ATP-binding site is contributed by lysine 613.

Belongs to the class-I aminoacyl-tRNA synthetase family.

It is found in the cytoplasm. The enzyme catalyses tRNA(Leu) + L-leucine + ATP = L-leucyl-tRNA(Leu) + AMP + diphosphate. The protein is Leucine--tRNA ligase of Streptococcus suis (strain 05ZYH33).